The primary structure comprises 122 residues: Basic phospholipase A2 Cdr-12 (122 aa).

Cystine bridges form between cysteine 26–cysteine 115, cysteine 28–cysteine 44, cysteine 43–cysteine 95, cysteine 49–cysteine 122, cysteine 50–cysteine 88, cysteine 57–cysteine 81, and cysteine 75–cysteine 86. Ca(2+) contacts are provided by tyrosine 27, glycine 29, and glycine 31. Histidine 47 is a catalytic residue. Aspartate 48 lines the Ca(2+) pocket. Aspartate 89 is an active-site residue.

It depends on Ca(2+) as a cofactor. In terms of tissue distribution, expressed by the venom gland.

It localises to the secreted. The enzyme catalyses a 1,2-diacyl-sn-glycero-3-phosphocholine + H2O = a 1-acyl-sn-glycero-3-phosphocholine + a fatty acid + H(+). Its function is as follows. Snake venom phospholipase A2 (PLA2) that induces myonecrosis and edema upon intramuscular injections in mice. In vitro, causes a potent blockade of neuromuscular transmission in young chicken biventer cervicis preparation and produces cytotoxicity in murine C2C12 skeletal muscle myotubes and lack cytolytic activity upon myoblasts in vitro. PLA2 catalyzes the calcium-dependent hydrolysis of the 2-acyl groups in 3-sn-phosphoglycerides. The sequence is that of Basic phospholipase A2 Cdr-12 from Crotalus durissus ruruima (South American rattlesnake).